The following is a 664-amino-acid chain: Transketolase 1 (664 aa).

Position 26 (His-26) interacts with substrate. Thiamine diphosphate is bound by residues His-66 and 114 to 116 (GPL). Asp-155 lines the Mg(2+) pocket. Gly-156 and Asn-185 together coordinate thiamine diphosphate. Mg(2+) contacts are provided by Asn-185 and Ile-187. Substrate contacts are provided by His-260, Arg-357, and Ser-384. His-260 provides a ligand contact to thiamine diphosphate. Glu-411 (proton donor) is an active-site residue. Phe-437 is a thiamine diphosphate binding site. Positions 461, 469, and 520 each coordinate substrate.

Belongs to the transketolase family. As to quaternary structure, homodimer. Mg(2+) serves as cofactor. The cofactor is Ca(2+). Requires Mn(2+) as cofactor. It depends on Co(2+) as a cofactor. Thiamine diphosphate is required as a cofactor.

It carries out the reaction D-sedoheptulose 7-phosphate + D-glyceraldehyde 3-phosphate = aldehydo-D-ribose 5-phosphate + D-xylulose 5-phosphate. In terms of biological role, catalyzes the transfer of a two-carbon ketol group from a ketose donor to an aldose acceptor, via a covalent intermediate with the cofactor thiamine pyrophosphate. The chain is Transketolase 1 (tkt1) from Vibrio vulnificus (strain CMCP6).